The primary structure comprises 284 residues: NAD kinase (284 aa).

Catalysis depends on Asp65, which acts as the Proton acceptor. NAD(+) contacts are provided by residues 65 to 66 (DG), 139 to 140 (ND), Arg150, Arg167, Asp169, and Gln239.

This sequence belongs to the NAD kinase family. Requires a divalent metal cation as cofactor.

The protein resides in the cytoplasm. It carries out the reaction NAD(+) + ATP = ADP + NADP(+) + H(+). In terms of biological role, involved in the regulation of the intracellular balance of NAD and NADP, and is a key enzyme in the biosynthesis of NADP. Catalyzes specifically the phosphorylation on 2'-hydroxyl of the adenosine moiety of NAD to yield NADP. The polypeptide is NAD kinase (Desulfatibacillum aliphaticivorans).